Reading from the N-terminus, the 85-residue chain is Probable Thioredoxin (85 aa).

Residues 2-85 (VVNIEVFTSP…LFEAINDEME (84 aa)) form the Glutaredoxin domain. An intrachain disulfide couples Cys-13 to Cys-16.

Belongs to the glutaredoxin family.

It is found in the cytoplasm. Acts to maintain redox homeostasis; functions as a protein disulfide reductase. This Methanothermobacter thermautotrophicus (strain ATCC 29096 / DSM 1053 / JCM 10044 / NBRC 100330 / Delta H) (Methanobacterium thermoautotrophicum) protein is Probable Thioredoxin.